Here is a 144-residue protein sequence, read N- to C-terminus: MMTQKKPIRDLIESCITKVEEHYKLKELYQRLNQGINVEEVLKETVEDYKEKMEKYILEVLEEIEKYCEYRESLHGDQKKEAEEELCECEKDLYCTIAELFELYHFFRELENLSKEQINEAVSIPVEIIYNVVLKLKGIEEKNQ.

The stretch at K24–Y67 forms a coiled coil.

This is an uncharacterized protein from Aquifex aeolicus (strain VF5).